Reading from the N-terminus, the 257-residue chain is Receptor expression-enhancing protein 4 (257 aa).

2 helical membrane passes run 1-21 (MVSW…CPAY) and 42-62 (WIVF…ISWF). Phosphoserine is present on residues Ser152 and Ser194. The disordered stretch occupies residues 183-257 (PIGYRAGGLQ…KKTVPSDVDS (75 aa)). At Thr196 the chain carries Phosphothreonine. Ser202 carries the post-translational modification Phosphoserine. Thr250 is subject to Phosphothreonine. Position 253 is a phosphoserine (Ser253).

It belongs to the DP1 family. As to expression, expressed in circumvallate papillae and testis.

Its subcellular location is the endoplasmic reticulum membrane. Its function is as follows. Microtubule-binding protein required to ensure proper cell division and nuclear envelope reassembly by sequestering the endoplasmic reticulum away from chromosomes during mitosis. Probably acts by clearing the endoplasmic reticulum membrane from metaphase chromosomes. The protein is Receptor expression-enhancing protein 4 (REEP4) of Homo sapiens (Human).